The primary structure comprises 419 residues: O-antigen ligase (419 aa).

The Cytoplasmic segment spans residues 1–19 (MLTSFKLHSLKPYTLKSSM). A helical membrane pass occupies residues 20-38 (ILEIITYILCFFSMIIAFV). Over 39-43 (DNTFS) the chain is Periplasmic. Residues 44–61 (IKIYNITAIVCLLSLILR) traverse the membrane as a helical segment. The Cytoplasmic portion of the chain corresponds to 62 to 71 (GRQENYNIKN). The chain crosses the membrane as a helical span at residues 72-91 (LILPLSIFLIGLLDLIWYSA). The Periplasmic segment spans residues 92-107 (FKVDNSPFRATYHSYL). The helical transmembrane segment at 108-125 (NTAKIFIFGSFIVFLTLT) threads the bilayer. At 126–134 (SQLKSKKES) the chain is on the cytoplasmic side. Residues 135 to 153 (VLYTLYSLSFLIAGYAMYI) form a helical membrane-spanning segment. Residues 154-167 (NSIHENDRISFGVG) lie on the Periplasmic side of the membrane. Residues 168 to 187 (TATGAAYSTMLIGIVSGVAI) form a helical membrane-spanning segment. Topologically, residues 188–194 (LYTKKNH) are cytoplasmic. A helical transmembrane segment spans residues 195 to 211 (PFLFLLNSCAVLYVLAL). Over 212–216 (TQTRA) the chain is Periplasmic. A helical transmembrane segment spans residues 217-234 (TLLLFPIICVAALIAYYN). Topologically, residues 235–240 (KSPKKF) are cytoplasmic. The chain crosses the membrane as a helical span at residues 241–259 (TSSIVLLIAILASIVIIFN). The Periplasmic segment spans residues 260-348 (KPIQNRYNEA…NEIIEAGSLK (89 aa)). Residues 349 to 367 (GLMGIFSTLFLYFSLFYIA) traverse the membrane as a helical segment. The Cytoplasmic segment spans residues 368–372 (YKKRA). A helical transmembrane segment spans residues 373–391 (LGLLILTLGIVGIGLSDVI). Residues 392–396 (IWARS) lie on the Periplasmic side of the membrane. Residues 397 to 412 (IPIIIISAIVLLLVIN) form a helical membrane-spanning segment. Over 413–419 (NRNNTIN) the chain is Cytoplasmic.

Homodimer.

The protein resides in the cell inner membrane. The enzyme catalyses a lipid-linked O antigen + a lipid A-core oligosaccharide = a lipopolysaccharide + a polyisoprenyl diphosphate.. It participates in bacterial outer membrane biogenesis; lipopolysaccharide biosynthesis. Activity does not require ATP and magnesium ions. In terms of biological role, transferase involved in the biosynthesis of the lipopolysaccharide (LPS). In vitro, catalyzes the transfer of a polymerized O-antigen molecule from its polyprenyl diphosphate membrane anchor to a terminal sugar of the lipid A-core oligosaccharide, finalizing the biosynthesis of the lipopolysaccharide. The enzyme is functional and can be used to give diverse hybrid O-antigens in vitro, but K12 strains do not produce the O-antigen in vivo due to mutations in the rfb gene cluster. K12 strains are phenotypically rough, their lipopolysaccharide having a complete core structure, but no O-antigen. In highly mucoid K12 strains, WaaL can ligate colanic acid (CA or M-antigen) repeats to a significant proportion of lipopolysaccharide (LPS) core acceptor molecules, forming the LPS glycoform M(LPS). The attachment point was identified as O-7 of the L-glycero-D-manno-heptose of the outer LPS core, the same position used for O-antigen ligation. Cannot catalyze ATP hydrolysis in vitro. In Escherichia coli (strain K12), this protein is O-antigen ligase.